The primary structure comprises 128 residues: Large ribosomal subunit protein eL22 (128 aa).

Position 62 is a phosphothreonine (threonine 62). At serine 66 the chain carries Phosphoserine. At lysine 69 the chain carries N6-succinyllysine.

It belongs to the eukaryotic ribosomal protein eL22 family. In terms of assembly, component of the large ribosomal subunit.

The protein localises to the cytoplasm. Functionally, component of the large ribosomal subunit. The ribosome is a large ribonucleoprotein complex responsible for the synthesis of proteins in the cell. The sequence is that of Large ribosomal subunit protein eL22 (Rpl22) from Rattus norvegicus (Rat).